The following is a 181-amino-acid chain: K99 fimbrial protein (181 aa).

The first 22 residues, 1-22 (MKKTLLAIILGGMAFATTNASA), serve as a signal peptide directing secretion. Cysteine 38 and cysteine 79 are disulfide-bonded.

The protein belongs to the fimbrial protein family.

It localises to the fimbrium. Fimbriae (also called pili), polar filaments radiating from the surface of the bacterium to a length of 0.5-1.5 micrometers and numbering 100-300 per cell, enable bacteria to colonize the epithelium of specific host organs. In terms of biological role, fanC is the main component of the K99 fimbriae. The polypeptide is K99 fimbrial protein (fanC) (Escherichia coli).